Consider the following 116-residue polypeptide: MANHRIDRVGMEIKREVNAILQKKVRDPRVEGVTITEVQMLGDLSAAKVYYTVMSDLASDNQKAQLGLEKATGTIKRELGKNLTMYKIPDLIFEKDNSIAYGNKIDQLLRALDKKS.

Belongs to the RbfA family. In terms of assembly, monomer. Binds 30S ribosomal subunits, but not 50S ribosomal subunits or 70S ribosomes.

The protein localises to the cytoplasm. In terms of biological role, one of several proteins that assist in the late maturation steps of the functional core of the 30S ribosomal subunit. Associates with free 30S ribosomal subunits (but not with 30S subunits that are part of 70S ribosomes or polysomes). Required for efficient processing of 16S rRNA. May interact with the 5'-terminal helix region of 16S rRNA. The sequence is that of Ribosome-binding factor A from Streptococcus uberis (strain ATCC BAA-854 / 0140J).